Consider the following 299-residue polypeptide: MTTITLIRGALTNWREYLVLCKPRIVSLIVFTAIVGMFLSVPDLAPWRVFLFGTLGIGLGAASAAAINHLIDEKADAVMNRTQGRPLPTGKLSREQALAFAITLGLSSMIILYFLVNPLTAWLTLASMIGYGIIYTAFLKPATPQNIVLGGASGAMPPVLGWAAVTGELHVHAFLLFLIIFVWTPPHFWALALARREEYSRTKYPMLPVTHGVDFTKQQIVLYTFLLFAVSLLPFVSHMSGLLYLVGAIGLGGRFVYLTIVLYRNTSNELAMKTFGYSIVYLAALFAFLLVDHYLPKFL.

8 consecutive transmembrane segments (helical) span residues 25–45 (IVSLIVFTAIVGMFLSVPDLA), 51–71 (LFGTLGIGLGAASAAAINHLI), 97–117 (ALAFAITLGLSSMIILYFLVN), 119–139 (LTAWLTLASMIGYGIIYTAFL), 147–167 (IVLGGASGAMPPVLGWAAVTG), 173–193 (AFLLFLIIFVWTPPHFWALAL), 225–245 (FLLFAVSLLPFVSHMSGLLYL), and 275–295 (FGYSIVYLAALFAFLLVDHYL).

It belongs to the UbiA prenyltransferase family. Protoheme IX farnesyltransferase subfamily.

Its subcellular location is the cell inner membrane. It carries out the reaction heme b + (2E,6E)-farnesyl diphosphate + H2O = Fe(II)-heme o + diphosphate. Its pathway is porphyrin-containing compound metabolism; heme O biosynthesis; heme O from protoheme: step 1/1. Functionally, converts heme B (protoheme IX) to heme O by substitution of the vinyl group on carbon 2 of heme B porphyrin ring with a hydroxyethyl farnesyl side group. In Nitrosococcus oceani (strain ATCC 19707 / BCRC 17464 / JCM 30415 / NCIMB 11848 / C-107), this protein is Protoheme IX farnesyltransferase.